Reading from the N-terminus, the 367-residue chain is Peptide chain release factor 2 (367 aa).

At Gln254 the chain carries N5-methylglutamine.

It belongs to the prokaryotic/mitochondrial release factor family. Methylated by PrmC. Methylation increases the termination efficiency of RF2.

The protein resides in the cytoplasm. Its function is as follows. Peptide chain release factor 2 directs the termination of translation in response to the peptide chain termination codons UGA and UAA. This is Peptide chain release factor 2 from Neisseria meningitidis serogroup B (strain ATCC BAA-335 / MC58).